The primary structure comprises 729 residues: MKKKAVLAEKPSVARDIARVLGCNQKGNGYLEGNGYIITWALGHLVTHADPEHYGKQYKTWKLEELPMLPKRLELVVIKQTAKQFHAVKHVLNRQDVGEVVIATDAGREGELVARWILEKAHVKKPVKRLWISSVTDKAIKDGFKQLKDGKRYETLYAAAAARAEADWYVGINGTRALTTKHNAQLSCGRVQTPTLAILADREEAIRKFVPKPYHTISVETKDGVTFRWADRRSKEERIFDDKRAKTLQEKLQQSAIVIDSVNAKTKRTPPPPLYDLTELQREANKRFGYSAKETLAALQRLYEQHKAVTYPRTDSRYLSSDLVETLKERLHAVDVQPFRKMVANAKKQGLANAKRQMVNDAKVSDHHALIPTEQPQSASAMSDKEAKLYHLIVRRFLANFFPPSESELTSVEATANGELLRAKGERLVSAGWRGQETGEEDEALARLLPAMSKGDKKAVKWVGMTQGKTSPPPRFNEGTLLAAMEKPAQHMEAKDETIKKTLAQAGGIGTVATRADIIEKLFSSFYIEKKGKDLYITSKGKQLLELVPAELKSPALTAEWEQRLEKIVQGKEQKQMFIAEMKEYAKAVVAQVKADTATFRHDNKTGEKCPECGKFLLEVNGKKGKMRVCQDRECGYRKNIAMTTNARCPKCKKKLELRGEGEGQVFACVCGHREKKAQFEQRRKQNKHKNVSKREVQSYMKKQNKQDQFANSALADQLAKLGLKGDDS.

The 134-residue stretch at 3–136 (KKAVLAEKPS…VKRLWISSVT (134 aa)) folds into the Toprim domain. Mg(2+)-binding residues include Glu-9 and Asp-105. The Topo IA-type catalytic domain maps to 153–590 (YETLYAAAAA…EMKEYAKAVV (438 aa)). Positions 187–192 (SCGRVQ) are interaction with DNA. Tyr-311 acts as the O-(5'-phospho-DNA)-tyrosine intermediate in catalysis. The interval 680-708 (FEQRRKQNKHKNVSKREVQSYMKKQNKQD) is disordered.

It belongs to the type IA topoisomerase family. Mg(2+) is required as a cofactor.

The catalysed reaction is ATP-independent breakage of single-stranded DNA, followed by passage and rejoining.. Functionally, releases the supercoiling and torsional tension of DNA, which is introduced during the DNA replication and transcription, by transiently cleaving and rejoining one strand of the DNA duplex. Introduces a single-strand break via transesterification at a target site in duplex DNA. The scissile phosphodiester is attacked by the catalytic tyrosine of the enzyme, resulting in the formation of a DNA-(5'-phosphotyrosyl)-enzyme intermediate and the expulsion of a 3'-OH DNA strand. The free DNA strand then undergoes passage around the unbroken strand, thus removing DNA supercoils. Finally, in the religation step, the DNA 3'-OH attacks the covalent intermediate to expel the active-site tyrosine and restore the DNA phosphodiester backbone. The chain is DNA topoisomerase 3 from Shouchella clausii (strain KSM-K16) (Alkalihalobacillus clausii).